A 140-amino-acid chain; its full sequence is Nucleoside diphosphate kinase (140 aa).

Lysine 11, phenylalanine 59, arginine 87, threonine 93, arginine 104, and asparagine 114 together coordinate ATP. Residue histidine 117 is the Pros-phosphohistidine intermediate of the active site.

Belongs to the NDK family. Homotetramer. The cofactor is Mg(2+).

The protein localises to the cytoplasm. The enzyme catalyses a 2'-deoxyribonucleoside 5'-diphosphate + ATP = a 2'-deoxyribonucleoside 5'-triphosphate + ADP. It catalyses the reaction a ribonucleoside 5'-diphosphate + ATP = a ribonucleoside 5'-triphosphate + ADP. Its function is as follows. Major role in the synthesis of nucleoside triphosphates other than ATP. The ATP gamma phosphate is transferred to the NDP beta phosphate via a ping-pong mechanism, using a phosphorylated active-site intermediate. The chain is Nucleoside diphosphate kinase from Bradyrhizobium diazoefficiens (strain JCM 10833 / BCRC 13528 / IAM 13628 / NBRC 14792 / USDA 110).